The primary structure comprises 251 residues: Phosphosulfolactate synthase (251 aa).

This sequence belongs to the phosphosulfolactate synthase family. Homotrimer. Requires Mg(2+) as cofactor.

It catalyses the reaction (2R)-O-phospho-3-sulfolactate = phosphoenolpyruvate + sulfite + H(+). It participates in cofactor biosynthesis; coenzyme M biosynthesis; sulfoacetaldehyde from phosphoenolpyruvate and sulfite: step 1/4. Catalyzes the addition of sulfite to phosphoenolpyruvate (PEP) to yield (2R)-phospho-3-sulfolactate (PSL). The polypeptide is Phosphosulfolactate synthase (comA) (Methanocaldococcus jannaschii (strain ATCC 43067 / DSM 2661 / JAL-1 / JCM 10045 / NBRC 100440) (Methanococcus jannaschii)).